Consider the following 669-residue polypeptide: Heat shock 70 kDa protein BIP3 (669 aa).

The N-terminal stretch at 1–32 is a signal peptide; the sequence is MARGATWTRRLHLHGLFLAVLLLLTLPAGSTA. Asn-423 carries N-linked (GlcNAc...) asparagine glycosylation. Positions 646–669 are disordered; it reads AVYQRSGGSRRDGDGGGDDDHDEL. The segment covering 660-669 has biased composition (acidic residues); it reads GGGDDDHDEL. The short motif at 666-669 is the Prevents secretion from ER element; sequence HDEL.

The protein belongs to the heat shock protein 70 family.

It localises to the endoplasmic reticulum. In terms of biological role, functions as a chaperone during endoplasmic reticulum (ER) stress response. The sequence is that of Heat shock 70 kDa protein BIP3 from Oryza sativa subsp. japonica (Rice).